A 757-amino-acid polypeptide reads, in one-letter code: Probable phospholipase C20G8.02, mitochondrial (757 aa).

The N-terminal 13 residues, 1-13, are a transit peptide targeting the mitochondrion; sequence MILYIVLPFYVRT. The interval 289 to 330 is disordered; the sequence is ESNSKPSTPVPTEELTSTTLLNDSSDPSDNFTPSNTESTIDL. The span at 302–329 shows a compositional bias: polar residues; it reads ELTSTTLLNDSSDPSDNFTPSNTESTID. Ser-524 is a catalytic residue. The region spanning 547–757 is the DDHD domain; sequence LDFPVANFFA…LAHFILTQLL (211 aa).

It belongs to the PA-PLA1 family.

It localises to the mitochondrion. Functionally, probable phospholipase that hydrolyzes phosphatidic acid. This Schizosaccharomyces pombe (strain 972 / ATCC 24843) (Fission yeast) protein is Probable phospholipase C20G8.02, mitochondrial.